The following is an 846-amino-acid chain: Aminopeptidase N (846 aa).

Substrate is bound by residues E120 and 252–256 (GAMEN). Position 288 (H288) interacts with Zn(2+). E289 functions as the Proton acceptor in the catalytic mechanism. Residues H292 and E311 each coordinate Zn(2+).

It belongs to the peptidase M1 family. Monomer. Zn(2+) serves as cofactor.

Its subcellular location is the cytoplasm. It carries out the reaction Release of an N-terminal amino acid, Xaa-|-Yaa- from a peptide, amide or arylamide. Xaa is preferably Ala, but may be most amino acids including Pro (slow action). When a terminal hydrophobic residue is followed by a prolyl residue, the two may be released as an intact Xaa-Pro dipeptide.. Its function is as follows. Aminopeptidase with broad substrate specificity to several peptides. It has more affinity for oligopeptides than for dipeptides. It plays an essential role in the metabolism, it may be involved in nitrogen supply or protein turnover. This Lactococcus lactis subsp. cremoris (strain MG1363) protein is Aminopeptidase N (pepN).